We begin with the raw amino-acid sequence, 694 residues long: Elongation factor G 2 (694 aa).

A tr-type G domain is found at 6-282 (SKLRNIGISA…GVVDYLPDPT (277 aa)). Residues 15–22 (AHIDSGKT), 82–86 (DTPGH), and 136–139 (NKCD) contribute to the GTP site.

This sequence belongs to the TRAFAC class translation factor GTPase superfamily. Classic translation factor GTPase family. EF-G/EF-2 subfamily.

It is found in the cytoplasm. Catalyzes the GTP-dependent ribosomal translocation step during translation elongation. During this step, the ribosome changes from the pre-translocational (PRE) to the post-translocational (POST) state as the newly formed A-site-bound peptidyl-tRNA and P-site-bound deacylated tRNA move to the P and E sites, respectively. Catalyzes the coordinated movement of the two tRNA molecules, the mRNA and conformational changes in the ribosome. The protein is Elongation factor G 2 of Anaeromyxobacter dehalogenans (strain 2CP-C).